A 284-amino-acid polypeptide reads, in one-letter code: 2,3,4,5-tetrahydropyridine-2,6-dicarboxylate N-succinyltransferase (284 aa).

Residues Arg-111 and Asp-148 each coordinate substrate.

The protein belongs to the transferase hexapeptide repeat family. Homotrimer.

It localises to the cytoplasm. The catalysed reaction is (S)-2,3,4,5-tetrahydrodipicolinate + succinyl-CoA + H2O = (S)-2-succinylamino-6-oxoheptanedioate + CoA. It functions in the pathway amino-acid biosynthesis; L-lysine biosynthesis via DAP pathway; LL-2,6-diaminopimelate from (S)-tetrahydrodipicolinate (succinylase route): step 1/3. The polypeptide is 2,3,4,5-tetrahydropyridine-2,6-dicarboxylate N-succinyltransferase (Brucella melitensis biotype 2 (strain ATCC 23457)).